Consider the following 160-residue polypeptide: Biogenesis of lysosome-related organelles complex 1 subunit 5 (160 aa).

The protein belongs to the BLOC1S5 family. In terms of assembly, component of the biogenesis of lysosome-related organelles complex-1 (BLOC-1) composed of Blos1, Blos2, Blos3, Blos4, Dysb, Muted, Pldn and Snapin.

Component of the biogenesis of lysosome-related organelles complex-1 (BLOC-1) involved in pigment granule biogenesis. The chain is Biogenesis of lysosome-related organelles complex 1 subunit 5 from Drosophila melanogaster (Fruit fly).